Here is a 1390-residue protein sequence, read N- to C-terminus: Hepatocyte growth factor receptor (1390 aa).

Positions 1–24 (MKTPAVLAPGILVLLFTLVQRSNG) are cleaved as a signal peptide. The Extracellular segment spans residues 25–932 (ECKEALAKSK…VIVQPDQNFT (908 aa)). In terms of domain architecture, Sema spans 27 to 515 (KEALAKSKMN…TGKKITKIPL (489 aa)). N45 carries N-linked (GlcNAc...) asparagine glycosylation. 4 disulfides stabilise this stretch: C95/C101, C98/C160, C133/C141, and C172/C175. An N-linked (GlcNAc...) asparagine glycan is attached at N106. An N-linked (GlcNAc...) asparagine glycan is attached at N149. Residue N202 is glycosylated (N-linked (GlcNAc...) asparagine). Disulfide bonds link C298–C363 and C385–C397. N-linked (GlcNAc...) asparagine glycosylation is found at N399 and N405. 4 cysteine pairs are disulfide-bonded: C520–C538, C526–C561, C529–C545, and C541–C551. IPT/TIG domains lie at 563–655 (PAIY…FSYV), 657–739 (PVIT…FSYR), and 742–836 (PIVY…LIYV). O-linked (Man) threonine glycosylation occurs at T582. N-linked (GlcNAc...) asparagine glycans are attached at residues N607 and N635. Residues T676 and T761 are each glycosylated (O-linked (Man) threonine). Residues N785, N879, and N930 are each glycosylated (N-linked (GlcNAc...) asparagine). The helical transmembrane segment at 933–955 (GLIAGVVSISVALLLLLGFFLWL) threads the bilayer. Residues 956-1390 (KKRKQIKDLG…TRPASFWETS (435 aa)) are Cytoplasmic-facing. S966 is subject to Phosphoserine. Position 977 is a phosphothreonine (T977). Phosphoserine occurs at positions 990, 997, and 1000. At Y1003 the chain carries Phosphotyrosine. A Protein kinase domain is found at 1078–1345 (VHFNEVIGRG…RISAIFSTFI (268 aa)). ATP is bound by residues 1084-1092 (IGRGHFGCV) and K1110. D1204 acts as the Proton acceptor in catalysis. Residues 1212–1381 (LDEKFTVKVA…EDNADNEVDT (170 aa)) form an interaction with RANBP9 region. Y1230 is modified (phosphotyrosine). Phosphotyrosine; by autocatalysis is present on residues Y1234 and Y1235. Residue T1289 is modified to Phosphothreonine. The tract at residues 1320-1359 (WHPKAEMRPSFSELVSRISAIFSTFIGEHYVHVNATYVNV) is interaction with MUC20. Phosphotyrosine; by autocatalysis occurs at positions 1349 and 1356. Residue Y1365 is modified to Phosphotyrosine.

Belongs to the protein kinase superfamily. Tyr protein kinase family. In terms of assembly, heterodimer made of an alpha chain (50 kDa) and a beta chain (145 kDa) which are disulfide linked. Binds PLXNB1. Interacts when phosphorylated with downstream effectors including STAT3, PIK3R1, SRC, PCLG1, GRB2 and GAB1. Interacts with SPSB1, SPSB2 and SPSB4. Interacts with INPP5D/SHIP1. When phosphorylated at Tyr-1356, interacts with INPPL1/SHIP2. Interacts with RANBP9 and RANBP10, as well as SPSB1, SPSB2, SPSB3 and SPSB4. SPSB1 binding occurs in the presence and in the absence of HGF, however HGF treatment has a positive effect on this interaction. Interacts with MUC20; prevents interaction with GRB2 and suppresses hepatocyte growth factor-induced cell proliferation. Interacts with GRB10. Interacts with PTPN1 and PTPN2. Interacts with HSP90AA1 and HSP90AB1; the interaction suppresses MET kinase activity. Interacts with tensin TNS3. Interacts (when phosphorylated) with tensin TNS4 (via SH2 domain); the interaction increases MET protein stability by inhibiting MET endocytosis and subsequent lysosomal degradation. Autophosphorylated in response to ligand binding on Tyr-1234 and Tyr-1235 in the kinase domain leading to further phosphorylation of Tyr-1349 and Tyr-1356 in the C-terminal multifunctional docking site. Dephosphorylated by PTPRJ at Tyr-1349 and Tyr-1365. Dephosphorylated by PTPN1 and PTPN2. In terms of processing, ubiquitinated. Ubiquitination by CBL regulates the receptor stability and activity through proteasomal degradation. Post-translationally, O-mannosylation of IPT/TIG domains by TMEM260 is required for protein maturation. O-mannosylated residues are composed of single mannose glycans that are not elongated or modified.

It localises to the membrane. It carries out the reaction L-tyrosyl-[protein] + ATP = O-phospho-L-tyrosyl-[protein] + ADP + H(+). Its activity is regulated as follows. In its inactive state, the C-terminal tail interacts with the catalytic domain and inhibits the kinase activity. Upon ligand binding, the C-terminal tail is displaced and becomes phosphorylated, thus increasing the kinase activity. Its function is as follows. Receptor tyrosine kinase that transduces signals from the extracellular matrix into the cytoplasm by binding to hepatocyte growth factor/HGF ligand. Regulates many physiological processes including proliferation, scattering, morphogenesis and survival. Ligand binding at the cell surface induces autophosphorylation of MET on its intracellular domain that provides docking sites for downstream signaling molecules. Following activation by ligand, interacts with the PI3-kinase subunit PIK3R1, PLCG1, SRC, GRB2, STAT3 or the adapter GAB1. Recruitment of these downstream effectors by MET leads to the activation of several signaling cascades including the RAS-ERK, PI3 kinase-AKT, or PLCgamma-PKC. The RAS-ERK activation is associated with the morphogenetic effects while PI3K/AKT coordinates prosurvival effects. During embryonic development, MET signaling plays a role in gastrulation, development and migration of muscles and neuronal precursors, angiogenesis and kidney formation. In adults, participates in wound healing as well as organ regeneration and tissue remodeling. Also promotes differentiation and proliferation of hematopoietic cells. The sequence is that of Hepatocyte growth factor receptor (MET) from Nomascus leucogenys (Northern white-cheeked gibbon).